The following is a 185-amino-acid chain: Prenylated Rab acceptor protein 1 (185 aa).

At 1 to 78 (MAVEKDQQKD…RNVEYYQSNY (78 aa)) the chain is on the cytoplasmic side. Positions 30–54 (AGREWLERRRATIRSWGSFVDQRRF) are required for interaction with prenylated RAB3A and VAMP2. 2 consecutive transmembrane segments (helical) span residues 79-94 (VFVFLGLILYCVATSP) and 95-112 (MLLVALAVFFGACYILYL). The Cytoplasmic segment spans residues 113 to 131 (RTLQSKFVLFGREVSPAHQ). Transmembrane regions (helical) follow at residues 132–148 (YALAGGVSFPFFWLAGA) and 149–165 (GSAVFWVLGATLVVIGS). The segment at 165–185 (SHAAFHQIEAVDGEELQMEPV) is required for interaction with GDI1. Over 166–185 (HAAFHQIEAVDGEELQMEPV) the chain is Cytoplasmic. Positions 175 to 185 (VDGEELQMEPV) are required for interaction with prenylated RAB3A and VAMP2. A homodimerization region spans residues 175 to 185 (VDGEELQMEPV).

It belongs to the PRA1 family. In terms of assembly, homodimer. Interacts with VAMP2 (synaptobrevin-2), prenylated Rab proteins, GDI1, NDRG1 and PCLO.

It localises to the cell membrane. The protein localises to the cytoplasm. The protein resides in the golgi apparatus. Its subcellular location is the cytoplasmic vesicle. It is found in the secretory vesicle. It localises to the synaptic vesicle. In terms of biological role, general Rab protein regulator required for vesicle formation from the Golgi complex. May control vesicle docking and fusion by mediating the action of Rab GTPases to the SNARE complexes. In addition it inhibits the removal of Rab GTPases from the membrane by GDI1. The polypeptide is Prenylated Rab acceptor protein 1 (RABAC1) (Bos taurus (Bovine)).